The sequence spans 410 residues: Peptidase T (410 aa).

H79 contacts Zn(2+). D81 is an active-site residue. Zn(2+) is bound at residue D142. The Proton acceptor role is filled by E176. E177, D199, and H381 together coordinate Zn(2+).

It belongs to the peptidase M20B family. Requires Zn(2+) as cofactor.

The protein localises to the cytoplasm. The enzyme catalyses Release of the N-terminal residue from a tripeptide.. Functionally, cleaves the N-terminal amino acid of tripeptides. This Bacillus cereus (strain G9842) protein is Peptidase T.